A 243-amino-acid chain; its full sequence is UPF0246 protein spyM18_2163 (243 aa).

It belongs to the UPF0246 family.

This is UPF0246 protein spyM18_2163 from Streptococcus pyogenes serotype M18 (strain MGAS8232).